The primary structure comprises 137 residues: Large ribosomal subunit protein uL16 (137 aa).

This sequence belongs to the universal ribosomal protein uL16 family. In terms of assembly, part of the 50S ribosomal subunit.

Its function is as follows. Binds 23S rRNA and is also seen to make contacts with the A and possibly P site tRNAs. This is Large ribosomal subunit protein uL16 from Mesorhizobium japonicum (strain LMG 29417 / CECT 9101 / MAFF 303099) (Mesorhizobium loti (strain MAFF 303099)).